Consider the following 490-residue polypeptide: Limb region 1 protein homolog (490 aa).

Residues Met-1–Arg-19 lie on the Extracellular side of the membrane. Residues Glu-20–Thr-40 form a helical membrane-spanning segment. At Arg-41–Phe-62 the chain is on the cytoplasmic side. The helical transmembrane segment at Leu-63 to Ile-83 threads the bilayer. Residues Ser-84–Asn-110 lie on the Extracellular side of the membrane. Residues Leu-111–Leu-131 traverse the membrane as a helical segment. The Cytoplasmic portion of the chain corresponds to Glu-132–Leu-151. The chain crosses the membrane as a helical span at residues Val-152–Ile-172. The Extracellular portion of the chain corresponds to Asp-173 to Glu-187. The helical transmembrane segment at Phe-188–Cys-208 threads the bilayer. The Cytoplasmic segment spans residues Thr-209 to Asn-291. Positions Arg-250–Ala-287 form a coiled coil. Residues Leu-292–Val-312 form a helical membrane-spanning segment. Topologically, residues Ala-313 to Ser-339 are extracellular. Residues Leu-340–Val-360 traverse the membrane as a helical segment. The Cytoplasmic portion of the chain corresponds to Ser-361–Thr-383. Residues Met-384–Met-404 form a helical membrane-spanning segment. The Extracellular segment spans residues Ser-405–Gly-426. The chain crosses the membrane as a helical span at residues Asn-427–Val-447. The Cytoplasmic portion of the chain corresponds to Arg-448–Leu-490.

The protein belongs to the LIMR family. In terms of tissue distribution, widely expressed with strongest expression in heart and pancreas.

Its subcellular location is the membrane. Putative membrane receptor. The polypeptide is Limb region 1 protein homolog (LMBR1) (Homo sapiens (Human)).